Here is a 375-residue protein sequence, read N- to C-terminus: Probable butyrate kinase 2 (375 aa).

This sequence belongs to the acetokinase family.

The protein localises to the cytoplasm. It carries out the reaction butanoate + ATP = butanoyl phosphate + ADP. The chain is Probable butyrate kinase 2 from Thermotoga maritima (strain ATCC 43589 / DSM 3109 / JCM 10099 / NBRC 100826 / MSB8).